Reading from the N-terminus, the 334-residue chain is uncharacterized protein (334 aa).

Catalysis depends on Tyr-52, which acts as the Proton donor. The interval 314 to 334 (LPPPASPNSEPQVTGGCSSMC) is disordered. Positions 320–334 (PNSEPQVTGGCSSMC) are enriched in polar residues.

Belongs to the aldo/keto reductase family.

Its subcellular location is the cytoplasm. It localises to the nucleus. This is an uncharacterized protein from Schizosaccharomyces pombe (strain 972 / ATCC 24843) (Fission yeast).